Consider the following 420-residue polypeptide: Serine hydroxymethyltransferase (420 aa).

(6S)-5,6,7,8-tetrahydrofolate-binding positions include Leu118 and 122-124 (GHL). Position 227 is an N6-(pyridoxal phosphate)lysine (Lys227).

This sequence belongs to the SHMT family. As to quaternary structure, homodimer. The cofactor is pyridoxal 5'-phosphate.

The protein resides in the cytoplasm. The enzyme catalyses (6R)-5,10-methylene-5,6,7,8-tetrahydrofolate + glycine + H2O = (6S)-5,6,7,8-tetrahydrofolate + L-serine. It participates in one-carbon metabolism; tetrahydrofolate interconversion. Its pathway is amino-acid biosynthesis; glycine biosynthesis; glycine from L-serine: step 1/1. Catalyzes the reversible interconversion of serine and glycine with tetrahydrofolate (THF) serving as the one-carbon carrier. This reaction serves as the major source of one-carbon groups required for the biosynthesis of purines, thymidylate, methionine, and other important biomolecules. Also exhibits THF-independent aldolase activity toward beta-hydroxyamino acids, producing glycine and aldehydes, via a retro-aldol mechanism. The chain is Serine hydroxymethyltransferase from Persephonella marina (strain DSM 14350 / EX-H1).